A 103-amino-acid chain; its full sequence is UPF0134 protein MPN_484 (103 aa).

This sequence belongs to the UPF0134 family.

This Mycoplasma pneumoniae (strain ATCC 29342 / M129 / Subtype 1) (Mycoplasmoides pneumoniae) protein is UPF0134 protein MPN_484.